The primary structure comprises 297 residues: Homoserine kinase (297 aa).

Residue 82 to 92 (PLTRGLGSSAS) participates in ATP binding.

Belongs to the GHMP kinase family. Homoserine kinase subfamily.

The protein localises to the cytoplasm. The catalysed reaction is L-homoserine + ATP = O-phospho-L-homoserine + ADP + H(+). It participates in amino-acid biosynthesis; L-threonine biosynthesis; L-threonine from L-aspartate: step 4/5. Functionally, catalyzes the ATP-dependent phosphorylation of L-homoserine to L-homoserine phosphate. This is Homoserine kinase from Bacillus thuringiensis subsp. konkukian (strain 97-27).